We begin with the raw amino-acid sequence, 132 residues long: Large ribosomal subunit protein uL14 (132 aa).

This sequence belongs to the universal ribosomal protein uL14 family. In terms of assembly, part of the 50S ribosomal subunit. Forms a cluster with proteins L3 and L24e, part of which may contact the 16S rRNA in 2 intersubunit bridges.

Binds to 23S rRNA. Forms part of two intersubunit bridges in the 70S ribosome. The protein is Large ribosomal subunit protein uL14 of Methanobrevibacter smithii (strain ATCC 35061 / DSM 861 / OCM 144 / PS).